A 206-amino-acid polypeptide reads, in one-letter code: MPIEIPTDLTPELVPFAWLLGTWEGNGFMGYGDAEQRAFRQRVTFEQTGLPFVIYRAQTTLLDEEGEPQREATYEQGFWELARPREDGDIGPGMLPPDPVPVLTSAEDVEKLRNADGGFDISVSILQPGGVAELYLGQIKGPRVDLRTDAVIRAQGAKEYQSGTRLYGLVNNHLMWAWDMAADGRELATHASAELTRIEPAAPSGS.

A GXWXGXG motif is present at residues 21–27; the sequence is GTWEGNG. His190 contributes to the heme b binding site.

It belongs to the nitrobindin family. In terms of assembly, homodimer. Heme b is required as a cofactor.

The enzyme catalyses peroxynitrite = nitrate. It functions in the pathway nitrogen metabolism. Functionally, heme-binding protein able to scavenge peroxynitrite and to protect free L-tyrosine against peroxynitrite-mediated nitration, by acting as a peroxynitrite isomerase that converts peroxynitrite to nitrate. Therefore, this protein likely plays a role in peroxynitrite sensing and in the detoxification of reactive nitrogen and oxygen species (RNS and ROS, respectively). Is able to bind nitric oxide (NO) in vitro, but may act as a sensor of peroxynitrite levels in vivo. This chain is Peroxynitrite isomerase, found in Kocuria rhizophila (strain ATCC 9341 / DSM 348 / NBRC 103217 / DC2201).